The sequence spans 410 residues: Probable peptidoglycan glycosyltransferase FtsW (410 aa).

Residues 1 to 37 are Cytoplasmic-facing; sequence MRSEERQLNLFGTSVNWSWPNLFKEREAPGMQLYDRA. The chain crosses the membrane as a helical span at residues 38–58; the sequence is LLFAVLSLICFGFVMVMSASM. Residues 59–69 lie on the Periplasmic side of the membrane; the sequence is PEAQSLTGNPY. Residues 70–90 traverse the membrane as a helical segment; it reads HFAIRHFAYLVGCAVIAAVVL. At 91-99 the chain is on the cytoplasmic side; that stretch reads RIEMSRWQQ. A helical transmembrane segment spans residues 100–120; the sequence is FSPLLLLIVGIMLVAVLLVGT. Residues 121-131 lie on the Periplasmic side of the membrane; the sequence is SVNGATRWLSV. The helical transmembrane segment at 132 to 154 threads the bilayer; the sequence is GPIRIQVAELAKFAFTIYMAGYL. The Cytoplasmic segment spans residues 155–163; that stretch reads VRRHQEIRE. A helical membrane pass occupies residues 164-184; it reads NAKGFYKPIAVFAVYAFLILM. At 185–186 the chain is on the periplasmic side; that stretch reads QP. Residues 187–207 form a helical membrane-spanning segment; that stretch reads DLGTVVVLFVGTVGLLFLAGA. A topological domain (cytoplasmic) is located at residue Arg208. Residues 209-229 form a helical membrane-spanning segment; that stretch reads LLDFFALILTGVMAFVALVLL. Residues 230 to 291 are Periplasmic-facing; the sequence is EPYRMRRVTS…PEAHTDFIFA (62 aa). A helical membrane pass occupies residues 292–312; that stretch reads VIGEELGFIGIVVVLSVLLFV. The Cytoplasmic portion of the chain corresponds to 313-336; it reads ALRAIKLGNLCIEIDKPFEGYLAY. Residues 337–357 traverse the membrane as a helical segment; the sequence is AIGIWFCFQTVVNVGASIGML. The Periplasmic portion of the chain corresponds to 358–364; that stretch reads PTKGLTL. A helical membrane pass occupies residues 365–385; that stretch reads PFISYGGSSLWVMTAAAMILI. Residues 386-410 lie on the Cytoplasmic side of the membrane; that stretch reads RIDHERRLSSIQAVQGKKVNDNREY.

Belongs to the SEDS family. FtsW subfamily.

It is found in the cell inner membrane. The catalysed reaction is [GlcNAc-(1-&gt;4)-Mur2Ac(oyl-L-Ala-gamma-D-Glu-L-Lys-D-Ala-D-Ala)](n)-di-trans,octa-cis-undecaprenyl diphosphate + beta-D-GlcNAc-(1-&gt;4)-Mur2Ac(oyl-L-Ala-gamma-D-Glu-L-Lys-D-Ala-D-Ala)-di-trans,octa-cis-undecaprenyl diphosphate = [GlcNAc-(1-&gt;4)-Mur2Ac(oyl-L-Ala-gamma-D-Glu-L-Lys-D-Ala-D-Ala)](n+1)-di-trans,octa-cis-undecaprenyl diphosphate + di-trans,octa-cis-undecaprenyl diphosphate + H(+). The protein operates within cell wall biogenesis; peptidoglycan biosynthesis. Its function is as follows. Peptidoglycan polymerase that is essential for cell division. The polypeptide is Probable peptidoglycan glycosyltransferase FtsW (Shewanella sediminis (strain HAW-EB3)).